The chain runs to 60 residues: MSSIWPPQKKVFTVGFITGGVTPVMVSFVWPAAQPQKKINYSRKKKYFRPRSFYKKNVSF.

A helical transmembrane segment spans residues 11–33 (VFTVGFITGGVTPVMVSFVWPAA). Residues asparagine 40 and asparagine 57 are each glycosylated (N-linked (GlcNAc...) asparagine; by host).

The protein resides in the host membrane. This is an uncharacterized protein from African swine fever virus (strain Badajoz 1971 Vero-adapted) (Ba71V).